A 76-amino-acid chain; its full sequence is MTKETQSFEEMMQELEQIVQKLDNETVSLEESLDLYQRGMKLSAACDTTLKNAEKKVNDLIKEEAEDVKNDESTDE.

The protein belongs to the XseB family. As to quaternary structure, heterooligomer composed of large and small subunits.

The protein localises to the cytoplasm. It catalyses the reaction Exonucleolytic cleavage in either 5'- to 3'- or 3'- to 5'-direction to yield nucleoside 5'-phosphates.. Functionally, bidirectionally degrades single-stranded DNA into large acid-insoluble oligonucleotides, which are then degraded further into small acid-soluble oligonucleotides. The polypeptide is Exodeoxyribonuclease 7 small subunit (Staphylococcus aureus (strain Mu3 / ATCC 700698)).